The sequence spans 89 residues: uncharacterized protein (89 aa).

This is an uncharacterized protein from Schizosaccharomyces pombe (strain 972 / ATCC 24843) (Fission yeast).